We begin with the raw amino-acid sequence, 260 residues long: Beta-lactamase SHV-6 (260 aa).

The signal sequence occupies residues 1 to 11 (LLATLPLAVHA). Residue serine 56 is the Acyl-ester intermediate of the active site. Cysteine 63 and cysteine 109 form a disulfide bridge. Glutamate 154 (proton acceptor) is an active-site residue. Residue 220–222 (KTG) coordinates substrate.

It belongs to the class-A beta-lactamase family.

It carries out the reaction a beta-lactam + H2O = a substituted beta-amino acid. Its function is as follows. SHV enzymes hydrolyze broad spectrum cephalosporins notably cefotaxime and ceftazidime. The polypeptide is Beta-lactamase SHV-6 (bla) (Klebsiella pneumoniae).